Reading from the N-terminus, the 92-residue chain is Putative phosphotransferase enzyme IIB component BB_0367 (92 aa).

Residues 10-92 (IKVAEHIVEC…ILYMMNEQKQ (83 aa)) form the PTS EIIB type-1 domain.

The protein localises to the cytoplasm. The phosphoenolpyruvate-dependent sugar phosphotransferase system (PTS), a major carbohydrate active -transport system, catalyzes the phosphorylation of incoming sugar substrates concomitant with their translocation across the cell membrane. The polypeptide is Putative phosphotransferase enzyme IIB component BB_0367 (Borreliella burgdorferi (strain ATCC 35210 / DSM 4680 / CIP 102532 / B31) (Borrelia burgdorferi)).